A 308-amino-acid chain; its full sequence is Probable 5-dehydro-4-deoxyglucarate dehydratase (308 aa).

It belongs to the DapA family.

It carries out the reaction 5-dehydro-4-deoxy-D-glucarate + H(+) = 2,5-dioxopentanoate + CO2 + H2O. It participates in carbohydrate acid metabolism; D-glucarate degradation; 2,5-dioxopentanoate from D-glucarate: step 2/2. The sequence is that of Probable 5-dehydro-4-deoxyglucarate dehydratase (ycbC) from Bacillus subtilis (strain 168).